We begin with the raw amino-acid sequence, 454 residues long: MAEFSQKQRKQSGSEGLGSVVDFLLANARLVLGVGGAAVLGIATLAVKRLIDRATSPPDEDDTKGDSWKELSLLRATSPQKPQPPPAAFSQPLATGSPSPSVPVEPTPIHSPTTPKFSTIAPLCLTFQERLLAFERKHVITPEAHVTLAKQLAGDIALELQAYLRSKFPELPFGALVPGGPLYDGLQAGTAEHVRLLAPLELEPGLWSLVPGVDTVAREPRCWAVRRTQLEFHPRGCSPWDRFLVGGYLSSRVLLELLRKALSASVNWPAIGSLLGCLIWPDVASEELLLKVQHECLEFTLAVLMVVPGASTDDRLLLAWPLEGLASNLWLQDLYPVETARLRALDDQDAGTRRRLLLLLCGICRGHPALVRLGWSHLTQVVLHLGEEEVAWTEEALGERFLQALEFLVGSLEQASLPCHFNPSVNLLGNFREEEIDDIGYVLYSGLQVPESLF.

Topologically, residues Met1 to Asp22 are mitochondrial intermembrane. A helical transmembrane segment spans residues Phe23–Ala43. Topologically, residues Thr44–Phe454 are cytoplasmic. The interval Ala76–Thr113 is disordered.

This sequence belongs to the MID49/MID51 family. In terms of assembly, interacts with DNM1L.

Its subcellular location is the mitochondrion outer membrane. In terms of biological role, mitochondrial outer membrane protein which regulates mitochondrial organization. It is required for mitochondrial fission and promotes the recruitment and association of the fission mediator dynamin-related protein 1 (DNM1L) to the mitochondrial surface independently of the mitochondrial fission FIS1 and MFF proteins. Regulates DNM1L GTPase activity. This Mus musculus (Mouse) protein is Mitochondrial dynamics protein MID49 (Mief2).